Reading from the N-terminus, the 405-residue chain is CMP-sialic acid transporter 4 (405 aa).

Topologically, residues 1 to 43 (MQRNGVMECSVCHSKVVAPSPRSVSRAYDKHRSKISSKYRALN) are cytoplasmic. The chain crosses the membrane as a helical span at residues 44–64 (FLLVSGDCILVGLQPILVFMS). At 65-74 (KVDGKFQFSP) the chain is on the lumenal side. A helical transmembrane segment spans residues 75-95 (ISVNFLTEVTKVIFAIVMLII). The Cytoplasmic portion of the chain corresponds to 96 to 121 (QSRKQKVGEKPLLSLSTFVQAARNNA). Residues 122–142 (LLAVPALLYAINNYLKFIMQL) traverse the membrane as a helical segment. Position 143 (Tyr143) is a topological domain, lumenal. The chain crosses the membrane as a helical span at residues 144-164 (FSPATVKMLSNLKVLVIAILL). At 165 to 171 (KFIMRRK) the chain is on the cytoplasmic side. The chain crosses the membrane as a helical span at residues 172–192 (FSIIQWEALALLLIGISVNQL). Over 193-203 (SSIPDGTKSFG) the chain is Lumenal. A helical membrane pass occupies residues 204 to 224 (LAVTTIAYIYTLIFVTVPSLA). Residues 225-244 (SVYNEYALKSQFDTSIYLQN) are Cytoplasmic-facing. Residues 245-265 (LFLYGYGAIFNFLGILGTVIF) traverse the membrane as a helical segment. Over 266–281 (QGPESFDILQGHSRAT) the chain is Lumenal. Residues 282–302 (MFLICNNAAQGILSSFFFKYA) traverse the membrane as a helical segment. Over 303–322 (DTILKKYSSTVATIFTGLAS) the chain is Cytoplasmic. The helical transmembrane segment at 323–343 (AAFLGHTLTVNFLLGISIVFI) threads the bilayer. At 344–405 (SMHQFFSPLA…TDERKPLLPI (62 aa)) the chain is on the lumenal side. A disordered region spans residues 386–405 (AADDASHLTSTDERKPLLPI). Residues 389 to 405 (DASHLTSTDERKPLLPI) show a composition bias toward basic and acidic residues.

It belongs to the nucleotide-sugar transporter family. CMP-Sialate:CMP antiporter (TC 2.A.7.12) subfamily.

The protein localises to the golgi apparatus membrane. Its function is as follows. Sugar transporter involved in the transport of CMP-sialic acid from the cytoplasm into the Golgi. May transport important nucleotide sugars such as CMP-Kdo (2-keto-3-deoxy-D-manno-octulosonic acid) in physiological conditions. In Oryza sativa subsp. indica (Rice), this protein is CMP-sialic acid transporter 4.